The primary structure comprises 49 residues: Large ribosomal subunit protein bL33A (49 aa).

The tract at residues 21–49 (KNKRNNPERVEMKKYCSRDNKHTLHRETK) is disordered. A compositionally biased stretch (basic and acidic residues) spans 25 to 49 (NNPERVEMKKYCSRDNKHTLHRETK).

Belongs to the bacterial ribosomal protein bL33 family.

The sequence is that of Large ribosomal subunit protein bL33A from Staphylococcus epidermidis (strain ATCC 35984 / DSM 28319 / BCRC 17069 / CCUG 31568 / BM 3577 / RP62A).